A 326-amino-acid chain; its full sequence is Transmembrane protein PVRIG (326 aa).

3 helical membrane-spanning segments follow: residues 26 to 46 (LVLPWVLLTLCVTAGTPEVWV), 62 to 78 (CGFLGSGSISLVTVSWG), and 172 to 192 (LAGILGVSGVLLFGCVYLLHL). The residue at position 233 (tyrosine 233) is a Phosphotyrosine. The segment at 296 to 326 (AGERPPHTGPGLTLFPDPRGPRAMEGPLGVR) is disordered.

As to quaternary structure, interacts with NECTIN2, hence competing with CD226. As to expression, expressed in some types of immune cells. Expressed at low levels on the surface of freshly isolated T-cells and natural killer (NK) cells, predominantly on CD8+ T-cells (mainly memory/effector, but not naive cells) and on both CD16+ and CD16- NK cells. T-cell expression levels are variable among individuals. Not detected in B-cells, naive or helper T-cells, monocytes, nor neutrophils (at protein level). Not detected in dendritic cells.

It is found in the cell membrane. Functionally, cell surface receptor for NECTIN2. May act as a coinhibitory receptor that suppresses T-cell receptor-mediated signals. Following interaction with NECTIN2, inhibits T-cell proliferation. Competes with CD226 for NECTIN2-binding. The sequence is that of Transmembrane protein PVRIG (PVRIG) from Homo sapiens (Human).